Consider the following 487-residue polypeptide: WAS/WASL-interacting protein family member 1 (487 aa).

Residues Met-1–Thr-14 are compositionally biased toward pro residues. The segment at Met-1–Arg-487 is disordered. Positions Glu-21–Ala-31 are enriched in polar residues. One can recognise a WH2 domain in the interval Gly-32 to Thr-49. The residue at position 33 (Arg-33) is an Asymmetric dimethylarginine. The tract at residues Lys-45 to Lys-48 is binds actin. Gly residues predominate over residues Gly-64–Phe-100. 2 positions are modified to omega-N-methylarginine: Arg-121 and Arg-130. Residues Pro-136–Pro-147 show a composition bias toward low complexity. The residue at position 138 (Ser-138) is a Phosphoserine. 2 stretches are compositionally biased toward pro residues: residues Pro-157–Pro-170 and Ser-178–Ile-190. Position 222 is a phosphoserine (Ser-222). Composition is skewed to pro residues over residues Phe-234–Pro-243, Val-269–Pro-285, and Ala-293–Pro-309. Position 324 is a phosphoserine (Ser-324). A compositionally biased stretch (pro residues) spans Pro-328 to Asp-355. Thr-329 carries the post-translational modification Phosphothreonine. Ser-334 is modified (phosphoserine). XRSGPXPPXP motif repeat units follow at residues Gly-336–Pro-345, Gly-358–Pro-367, and Pro-394–Pro-403. A compositionally biased stretch (pro residues) spans Gly-397–Ser-418. Residues Thr-419 to Ser-428 show a composition bias toward polar residues. The span at Ala-464–Gly-478 shows a compositional bias: basic and acidic residues.

It belongs to the verprolin family. Binds to WAS within the N-terminal region, at a site distinct from the CDC42-binding site. Binds profilin and actin. Interacts with DBNL. Binds to WASL. Interacts with DBNL. Interacts with FNBP1L (via the SH3 domain). In terms of tissue distribution, isoforms were differentially expressed. One isoform was ubiquitously expressed, another was muscle-specific and another was expressed in the liver, heart and testis.

The protein localises to the cytoplasmic vesicle. The protein resides in the cytoplasm. It localises to the cytoskeleton. It is found in the cell projection. Its subcellular location is the ruffle. Plays a role in the reorganization of the actin cytoskeleton. Contributes with NCK1 and GRB2 in the recruitment and activation of WASL. Plays a role in the formation of cell ruffles. May participate in regulating the subcellular localization of WASL, resulting in the disassembly of stress fibers in favor of filopodia formation. The protein is WAS/WASL-interacting protein family member 1 (Wipf1) of Rattus norvegicus (Rat).